The following is a 695-amino-acid chain: Threonine--tRNA ligase (695 aa).

In terms of domain architecture, TGS spans 1-76 (MPRIPSPPQA…TTTDVVEPVT (76 aa)). The segment at 279-585 (DHRKLGVELD…LLEHHAGAFP (307 aa)) is catalytic. Positions 384, 435, and 562 each coordinate Zn(2+).

The protein belongs to the class-II aminoacyl-tRNA synthetase family. As to quaternary structure, homodimer. It depends on Zn(2+) as a cofactor.

It localises to the cytoplasm. It catalyses the reaction tRNA(Thr) + L-threonine + ATP = L-threonyl-tRNA(Thr) + AMP + diphosphate + H(+). Functionally, catalyzes the attachment of threonine to tRNA(Thr) in a two-step reaction: L-threonine is first activated by ATP to form Thr-AMP and then transferred to the acceptor end of tRNA(Thr). Also edits incorrectly charged L-seryl-tRNA(Thr). The chain is Threonine--tRNA ligase from Leifsonia xyli subsp. xyli (strain CTCB07).